We begin with the raw amino-acid sequence, 480 residues long: Coronin-2B (480 aa).

5 WD repeats span residues 85 to 125 (GHQG…LKRN), 135 to 177 (GHSR…KMID), 179 to 217 (HTDV…VLQE), 220 to 263 (CKNH…MPMI), and 265 to 308 (EEID…PYLS). Residues 436 to 479 (NELLRMFFRQQDEIRRLKEELAQKDIRLRQLQLELKNLRNNPKN) are a coiled coil.

This sequence belongs to the WD repeat coronin family. Binds to F-actin and to vinculin.

Its subcellular location is the cytoplasm. The protein resides in the cytoskeleton. In terms of biological role, may play a role in the reorganization of neuronal actin structure. The protein is Coronin-2B (Coro2b) of Mus musculus (Mouse).